The primary structure comprises 473 residues: H(+)/Cl(-) exchange transporter ClcA (473 aa).

Residues 1–32 (MKTDTSTFLAQQIVRLRRRDQIRRLMQRDKTP) are Cytoplasmic-facing. Residues 33-69 (LAILFMAAVVGTLTGLVGVAFEKTVSWVQNMRIGALV) form a helical membrane-spanning segment. The Periplasmic segment spans residues 70-76 (QVADHAF). A helical membrane pass occupies residues 77–100 (LLWPLAFILSALLAMVGYFLVRKF). Residues 106–110 (GSGIP) carry the Selectivity filter part_1 motif. Ser107 serves as a coordination point for chloride. The segment at residues 109–116 (IPEIEGAL) is an intramembrane region (helical). Over 117–123 (EELRPVR) the chain is Cytoplasmic. Transmembrane regions (helical) follow at residues 124–141 (WWRV…TLGA) and 148–166 (EGPT…LDVF). The Selectivity filter part_2 signature appears at 146–150 (GREGP). Residues 167–176 (RMRSAEARHT) lie on the Cytoplasmic side of the membrane. 2 consecutive intramembrane regions (helical) follow at residues 177–189 (LLAT…LSAA) and 193–201 (PLAGILFII). The Cytoplasmic segment spans residues 202–214 (EEMRPQFRYNLIS). A helical membrane pass occupies residues 215 to 232 (IKAVFTGVIMSSIVFRIF). Over 233-252 (NGEAPIIEVGKLSDAPVNTL) the chain is Periplasmic. Residues 253 to 281 (WLYLILGIIFGCVGPVFNSLVLRTQDMFQ) traverse the membrane as a helical segment. Topologically, residues 282-287 (RFHGGE) are cytoplasmic. Residues 288–309 (IKKWVLMGGAIGGLCGILGLIE) form a helical membrane-spanning segment. Over 310-329 (PAAAGGGFNLIPIAAAGNFS) the chain is Periplasmic. Transmembrane regions (helical) follow at residues 330-349 (VGLL…LCFS) and 355-376 (GIFA…MAAA). The Selectivity filter part_3 motif lies at 355-359 (GIFAP). Chloride-binding residues include Ile356 and Phe357. Residues 377–386 (VLFPQYHLEA) lie on the Periplasmic side of the membrane. An intramembrane region (helical) is located at residues 387 to 401 (GTFAIAGMGALMAAS). Positions 402-404 (VRA) form an intramembrane region, note=Loop between two helices. The segment at residues 405–416 (PLTGIVLVLEMT) is an intramembrane region (helical). The note=Loop between two helices intramembrane region spans 417 to 421 (DNYQL). Residues 422–438 (ILPMIITCLGATLLAQF) form a helical membrane-spanning segment. At 439–473 (LGGKPLYSTILARTLAKQDAEQAAKNQNAPAGENT) the chain is on the cytoplasmic side. Chloride is bound at residue Tyr445.

Belongs to the chloride channel (TC 2.A.49) family. ClcA subfamily. In terms of assembly, homodimer.

It localises to the cell inner membrane. The catalysed reaction is 2 chloride(in) + H(+)(out) = 2 chloride(out) + H(+)(in). Functionally, proton-coupled chloride transporter. Functions as antiport system and exchanges two chloride ions for 1 proton. Probably acts as an electrical shunt for an outwardly-directed proton pump that is linked to amino acid decarboxylation, as part of the extreme acid resistance (XAR) response. The sequence is that of H(+)/Cl(-) exchange transporter ClcA from Salmonella typhi.